A 176-amino-acid chain; its full sequence is MFEKDKWMSIGEIVAPQGLRGDLRIKPSSDFPERFTKPGKRWIQKTDELPTEIKLTKGKLIPGKSIYVLSIEGVSTRSSAEEIIGWKLVIPIDSRPMLSKDEYHYHDLIGLEARSGPSKALIGYVTDLIKGGNDLLEIELVEGKKVLVPFVKEIVPEIEIKEKWLLINPPPGLLEL.

A PRC barrel domain is found at 100 to 173; sequence KDEYHYHDLI…WLLINPPPGL (74 aa).

It belongs to the RimM family. In terms of assembly, binds ribosomal protein uS19.

It is found in the cytoplasm. In terms of biological role, an accessory protein needed during the final step in the assembly of 30S ribosomal subunit, possibly for assembly of the head region. Essential for efficient processing of 16S rRNA. May be needed both before and after RbfA during the maturation of 16S rRNA. It has affinity for free ribosomal 30S subunits but not for 70S ribosomes. In Prochlorococcus marinus (strain NATL1A), this protein is Ribosome maturation factor RimM.